The primary structure comprises 1383 residues: NPC intracellular cholesterol transporter 1 homolog 1 (1383 aa).

An N-terminal signal peptide occupies residues 1 to 20 (MKQLLIFCLLFGSIFHHGDA). Intrachain disulfides connect C22–C76, C28–C39, C65–C111, C77–C115, C99–C246, C102–C167, C182–C187, and C235–C251. N-linked (GlcNAc...) asparagine glycosylation is present at N42. An N-linked (GlcNAc...) asparagine glycan is attached at N231. 2 helical membrane-spanning segments follow: residues 282–302 (IFVMLAFIGSLAVLLCVGFVF) and 353–373 (PKSHFFIGCAVLIFCLPGMIY). N447 is a glycosylation site (N-linked (GlcNAc...) asparagine). Intrachain disulfides connect C464/C474 and C526/C541. N-linked (GlcNAc...) asparagine glycosylation occurs at N558. Helical transmembrane passes span 627–647 (EIVTVVIALAFLIGYVTFSLG), 665–685 (ICLGMLSVIINLLSSFCSWGI), 697–717 (ALVVQFFVVTLLGVCRTFMVV), 746–766 (TMPAMFSSSLGCAFSFFIGGF), 780–800 (GLAVLIDVVLHCTIFLALFVW), and 856–876 (IITGIIFIASFITTVILSSKI). The SSD domain occupies 627–800 (EIVTVVIALA…CTIFLALFVW (174 aa)). Intrachain disulfides connect C929–C934, C976–C1046, C977–C1005, and C988–C1002. N993 and N1082 each carry an N-linked (GlcNAc...) asparagine glycan. Helical transmembrane passes span 1126-1146 (IMPILTTQLFITVVGVFGIIC), 1157-1177 (ACAVICQVSNYFHIVAFMYIF), 1179-1199 (IPVNALSATNLVMSSGILIEF), 1226-1246 (IGPIILSGPVVTMAGSTMFLS), and 1260-1280 (LFLITIVSSAVHALIILPILL).

Belongs to the patched family.

The protein localises to the membrane. It catalyses the reaction cholesterol(in) = cholesterol(out). Involved in the uptake or utilization of cholesterol. Ncr-1 and ncr-2 act redundantly to prevent dauer larva formation under favorable growth conditions, and are required for the normal functioning of ADF, ASI and ASG neurons. This is NPC intracellular cholesterol transporter 1 homolog 1 from Caenorhabditis elegans.